We begin with the raw amino-acid sequence, 141 residues long: Hemoglobin subunit alpha-D (141 aa).

A Globin domain is found at 1 to 141; that stretch reads MLTADDKKIL…VAAVLAEKYR (141 aa). The heme b site is built by H58 and H87.

This sequence belongs to the globin family. As to quaternary structure, heterotetramer of two alpha-D chains and two beta chains. Red blood cells.

In terms of biological role, involved in oxygen transport from the lung to the various peripheral tissues. In Branta canadensis (Canada goose), this protein is Hemoglobin subunit alpha-D (HBAD).